The primary structure comprises 483 residues: Cobyric acid synthase (483 aa).

Positions 251-438 constitute a GATase cobBQ-type domain; that stretch reads ALIVAVPMLP…LHGVFSADRF (188 aa). The Nucleophile role is filled by cysteine 333. Residue histidine 430 is part of the active site.

The protein belongs to the CobB/CobQ family. CobQ subfamily.

It functions in the pathway cofactor biosynthesis; adenosylcobalamin biosynthesis. In terms of biological role, catalyzes amidations at positions B, D, E, and G on adenosylcobyrinic A,C-diamide. NH(2) groups are provided by glutamine, and one molecule of ATP is hydrogenolyzed for each amidation. This chain is Cobyric acid synthase, found in Brucella suis (strain ATCC 23445 / NCTC 10510).